Here is a 309-residue protein sequence, read N- to C-terminus: Taste receptor type 2 member 66 (309 aa).

Position 1 (Met1) is a topological domain, extracellular. Residues 2–22 (ITFLPIIFSILIVVTFVIGNF) traverse the membrane as a helical segment. Over 23–46 (ANGFIALANSIEWFKRQKISFADQ) the chain is Cytoplasmic. The chain crosses the membrane as a helical span at residues 47 to 67 (ILTALAVPRVGLLWVLLLNWY). The Extracellular segment spans residues 68–86 (ATELNPAFYSIEVRITAYN). The chain crosses the membrane as a helical span at residues 87–107 (LWAVINHFSNWLATSLSIFYL). The Cytoplasmic segment spans residues 108–126 (LKIANFSNLIFLRLKRRVK). Residues 127–147 (SVVLVILLGPLLFLVCHLFVI) form a helical membrane-spanning segment. The Extracellular segment spans residues 148 to 178 (NMNQIIWTKEYEGNMTWKIKLRSAMYLSNTT). N-linked (GlcNAc...) asparagine glycosylation is found at Asn161 and Asn176. A helical membrane pass occupies residues 179-199 (VTILANLVPFTVTLISFLLLV). Residues 200-229 (CSLCKHLKKMQLHGKGSQDPSTKVHIKALQ) are Cytoplasmic-facing. Residues 230 to 250 (TVISFLLLCAIYFVSVIISVW) form a helical membrane-spanning segment. Over 251 to 259 (SFKNLENKP) the chain is Extracellular. A helical membrane pass occupies residues 260–280 (VFMFCQAIGFSCSSAHPFILI). The Cytoplasmic segment spans residues 281–309 (WGNKKLKQPFLSVLWQMRYWVKGEKPSSS).

Belongs to the G-protein coupled receptor T2R family.

The protein localises to the membrane. In terms of biological role, receptor that may play a role in the perception of bitterness and is gustducin-linked. May play a role in sensing the chemical composition of the gastrointestinal content. The activity of this receptor may stimulate alpha gustducin, mediate PLC-beta-2 activation and lead to the gating of TRPM5. This Pan paniscus (Pygmy chimpanzee) protein is Taste receptor type 2 member 66 (TAS2R66).